Consider the following 468-residue polypeptide: UDP-N-acetylmuramoylalanine--D-glutamate ligase (468 aa).

117 to 123 lines the ATP pocket; the sequence is GTDGKTT.

It belongs to the MurCDEF family.

Its subcellular location is the cytoplasm. The enzyme catalyses UDP-N-acetyl-alpha-D-muramoyl-L-alanine + D-glutamate + ATP = UDP-N-acetyl-alpha-D-muramoyl-L-alanyl-D-glutamate + ADP + phosphate + H(+). The protein operates within cell wall biogenesis; peptidoglycan biosynthesis. Functionally, cell wall formation. Catalyzes the addition of glutamate to the nucleotide precursor UDP-N-acetylmuramoyl-L-alanine (UMA). This is UDP-N-acetylmuramoylalanine--D-glutamate ligase from Chloroherpeton thalassium (strain ATCC 35110 / GB-78).